The sequence spans 545 residues: Chaperonin GroEL 4 (545 aa).

Residues 30–33 (TLGP), Lys51, 87–91 (DGTTT), Gly415, and Asp495 contribute to the ATP site.

Belongs to the chaperonin (HSP60) family. As to quaternary structure, forms a cylinder of 14 subunits composed of two heptameric rings stacked back-to-back. Interacts with the co-chaperonin GroES.

The protein localises to the cytoplasm. The enzyme catalyses ATP + H2O + a folded polypeptide = ADP + phosphate + an unfolded polypeptide.. Its function is as follows. Together with its co-chaperonin GroES, plays an essential role in assisting protein folding. The GroEL-GroES system forms a nano-cage that allows encapsulation of the non-native substrate proteins and provides a physical environment optimized to promote and accelerate protein folding. This is Chaperonin GroEL 4 from Rhizobium meliloti (strain 1021) (Ensifer meliloti).